We begin with the raw amino-acid sequence, 328 residues long: MAKDIRVLLYYLYTPIENAEQFAADHLAFCKSIGLKGRILVADEGINGTVSGDYETTQKYMDYVHSLPGMEELWFKIDEENEQAFKKMFVRYKKEIVHLGLEDNDFDNDINPLETTGAYLSPKEFKEALLDKDTVVLDTRNDYEYDLGHFRGAIRPDIRNFRELPQWVRDNKEKFMDKRVVVYCTGGVRCEKFSGWMVREGYKDVGQLHGGIATYGKDPEVQGELWDGKMYVFDERIAVDVNHVNPTIVGKDWFDGTPCERYVNCGNPFCNRRILTSEENEDKYLRGCSHECRVHPRNRYVSKNELTQAEVIERLAAIGESLDQAATV.

Positions L130–E224 constitute a Rhodanese domain. Residue C184 is the Cysteine persulfide intermediate of the active site.

This sequence belongs to the TrhO family.

It catalyses the reaction uridine(34) in tRNA + AH2 + O2 = 5-hydroxyuridine(34) in tRNA + A + H2O. In terms of biological role, catalyzes oxygen-dependent 5-hydroxyuridine (ho5U) modification at position 34 in tRNAs. This chain is tRNA uridine(34) hydroxylase, found in Streptococcus pneumoniae (strain ATCC 700669 / Spain 23F-1).